The following is a 354-amino-acid chain: Ferredoxin--NADP reductase (354 aa).

Residues Asp42, Gln50, Tyr55, Ile95, Phe130, Asp299, and Thr339 each coordinate FAD.

The protein belongs to the ferredoxin--NADP reductase type 2 family. Homodimer. FAD serves as cofactor.

The catalysed reaction is 2 reduced [2Fe-2S]-[ferredoxin] + NADP(+) + H(+) = 2 oxidized [2Fe-2S]-[ferredoxin] + NADPH. The sequence is that of Ferredoxin--NADP reductase from Acidovorax sp. (strain JS42).